We begin with the raw amino-acid sequence, 348 residues long: Mannonate dehydratase (348 aa).

Belongs to the mannonate dehydratase family. It depends on Fe(2+) as a cofactor. Mn(2+) is required as a cofactor.

It carries out the reaction D-mannonate = 2-dehydro-3-deoxy-D-gluconate + H2O. It participates in carbohydrate metabolism; pentose and glucuronate interconversion. In terms of biological role, catalyzes the dehydration of D-mannonate. The sequence is that of Mannonate dehydratase from Streptococcus agalactiae serotype V (strain ATCC BAA-611 / 2603 V/R).